Consider the following 952-residue polypeptide: Protein translocase subunit SecA (952 aa).

ATP is bound by residues glutamine 104, 122 to 126, and aspartate 512; that span reads GEGKT.

The protein belongs to the SecA family. In terms of assembly, monomer and homodimer. Part of the essential Sec protein translocation apparatus which comprises SecA, SecYEG and auxiliary proteins SecDF. Other proteins may also be involved.

It localises to the cell inner membrane. It is found in the cytoplasm. It carries out the reaction ATP + H2O + cellular proteinSide 1 = ADP + phosphate + cellular proteinSide 2.. Part of the Sec protein translocase complex. Interacts with the SecYEG preprotein conducting channel. Has a central role in coupling the hydrolysis of ATP to the transfer of proteins into and across the cell membrane, serving as an ATP-driven molecular motor driving the stepwise translocation of polypeptide chains across the membrane. The sequence is that of Protein translocase subunit SecA from Gloeobacter violaceus (strain ATCC 29082 / PCC 7421).